The primary structure comprises 130 residues: Ribonuclease P protein component (130 aa).

This sequence belongs to the RnpA family. In terms of assembly, consists of a catalytic RNA component (M1 or rnpB) and a protein subunit.

It carries out the reaction Endonucleolytic cleavage of RNA, removing 5'-extranucleotides from tRNA precursor.. Functionally, RNaseP catalyzes the removal of the 5'-leader sequence from pre-tRNA to produce the mature 5'-terminus. It can also cleave other RNA substrates such as 4.5S RNA. The protein component plays an auxiliary but essential role in vivo by binding to the 5'-leader sequence and broadening the substrate specificity of the ribozyme. The polypeptide is Ribonuclease P protein component (Psychrobacter sp. (strain PRwf-1)).